The chain runs to 451 residues: uncharacterized protein (451 aa).

Residues 1 to 451 (MSETENKTTT…KKEAAKNKSK (451 aa)) are disordered. Over residues 9–22 (TTETPTTTDSTVTT) the composition is skewed to low complexity. Polar residues predominate over residues 44–54 (VKNQLSNTRTR). Positions 73–99 (KLIDTKERKEKKEKKEKEPKEPKEPKE) are enriched in basic and acidic residues. Acidic residues predominate over residues 114–147 (GDEEEDEEKEEDEEQKEEQSQEEDSEESEEEQNS). The segment covering 152–162 (KKKKKQAKKVA) has biased composition (basic residues). Basic and acidic residues-rich tracts occupy residues 163-192 (KKET…EKEA), 199-210 (STEKKEKEEKPK), and 217-230 (KKDQ…KDGD). Residues 232–244 (STTTTATATTTTD) are compositionally biased toward low complexity. Basic and acidic residues-rich tracts occupy residues 284–303 (TEEK…ETKK) and 311–340 (AAAE…DDKP). Residues 341–355 (AATTTTTTAAAATTT) are compositionally biased toward low complexity. Residues 356–383 (EEPKEKITKPAADKKKAPANKKAEKDQS) show a composition bias toward basic and acidic residues. Residues 393–425 (TTTATTTTTNKDATAPTTTTNKDATAPTTTTTK) show a composition bias toward low complexity. Residues 441–451 (PKKEAAKNKSK) show a composition bias toward basic and acidic residues.

This is an uncharacterized protein from Dictyostelium discoideum (Social amoeba).